The sequence spans 538 residues: uncharacterized protein (538 aa).

Disordered stretches follow at residues 20-71 (RLSA…GGAQ), 151-211 (LWAE…EHPK), 288-331 (MLQP…QQHK), and 458-482 (EFEK…LKNY). Positions 154-171 (ESEKSESKGTRRDFRSYD) are enriched in basic and acidic residues.

This is an uncharacterized protein from Homo sapiens (Human).